Here is a 348-residue protein sequence, read N- to C-terminus: A-kinase anchor protein 7 isoform gamma (348 aa).

A disordered region spans residues 1 to 25 (MERPEAGGINSNECENVSRKKKMSE). Residues Thr-129 and 219-221 (HLT) contribute to the AMP site. CMP contacts are provided by residues Thr-129 and 219–221 (HLT). Residues 294 to 348 (AELVRLSKRLVENAVLKAVQQYLEETQNKNKPGEGSSVKTEAADQNGNDNENNRK) form a PKA-RII-alpha subunit binding domain region. The segment at 295–319 (ELVRLSKRLVENAVLKAVQQYLEET) is RI-alpha-binding. Positions 296–309 (LVRLSKRLVENAVL) are RII-binding. Positions 316 to 348 (LEETQNKNKPGEGSSVKTEAADQNGNDNENNRK) are disordered. A compositionally biased stretch (polar residues) spans 330–348 (SVKTEAADQNGNDNENNRK).

As to quaternary structure, binds cAMP-dependent protein kinase (PKA). Interacts with PRKCA; only the cytoplasmic form is capable of interacting with PRKCA. As to expression, expressed in brain, heart, lung, pancreas and placenta.

Its subcellular location is the nucleus. The protein resides in the cytoplasm. Probably targets cAMP-dependent protein kinase (PKA) to the cellular membrane or cytoskeletal structures. The membrane-associated form reduces epithelial sodium channel (ENaC) activity, whereas the free cytoplasmic form may negatively regulate ENaC channel feedback inhibition by intracellular sodium. The chain is A-kinase anchor protein 7 isoform gamma (AKAP7) from Homo sapiens (Human).